The primary structure comprises 412 residues: Multifunctional CCA protein (412 aa).

Residues Gly-8 and Arg-11 each contribute to the ATP site. CTP is bound by residues Gly-8 and Arg-11. Residues Asp-21 and Asp-23 each coordinate Mg(2+). Residues Arg-91, Arg-137, and Arg-140 each coordinate ATP. Positions 91, 137, and 140 each coordinate CTP. Residues 228 to 329 (TGIHTLMTLS…VKLFDSIDAW (102 aa)) enclose the HD domain.

It belongs to the tRNA nucleotidyltransferase/poly(A) polymerase family. Bacterial CCA-adding enzyme type 1 subfamily. In terms of assembly, monomer. Can also form homodimers and oligomers. It depends on Mg(2+) as a cofactor. Requires Ni(2+) as cofactor.

It carries out the reaction a tRNA precursor + 2 CTP + ATP = a tRNA with a 3' CCA end + 3 diphosphate. The catalysed reaction is a tRNA with a 3' CCA end + 2 CTP + ATP = a tRNA with a 3' CCACCA end + 3 diphosphate. Functionally, catalyzes the addition and repair of the essential 3'-terminal CCA sequence in tRNAs without using a nucleic acid template. Adds these three nucleotides in the order of C, C, and A to the tRNA nucleotide-73, using CTP and ATP as substrates and producing inorganic pyrophosphate. tRNA 3'-terminal CCA addition is required both for tRNA processing and repair. Also involved in tRNA surveillance by mediating tandem CCA addition to generate a CCACCA at the 3' terminus of unstable tRNAs. While stable tRNAs receive only 3'-terminal CCA, unstable tRNAs are marked with CCACCA and rapidly degraded. In Escherichia coli O1:K1 / APEC, this protein is Multifunctional CCA protein.